We begin with the raw amino-acid sequence, 255 residues long: MAHSSATAGPQADYSGEIAELYDLVHQGKGKDYHREAADLAALVRRHSPKAASLLDVACGTGMHLRHLADSFGTVEGLELSADMLAIARRRNPDAVLHHGDMRDFSLGRRFSAVTCMFSSIGHLAGQAELDAALERFAAHVLPDGVVVVEPWWFPENFTPGYVAAGTVEAGGTTVTRVSHSSREGEATRIEVHYLVAGPDRGITHHEESHRITLFTREQYERAFTAAGLSVEFMPGGPSGRGLFTGLPGAKGETR.

Residues Y14, Y22, Y33, A58, 58 to 59 (AC), E79, 101 to 102 (DM), and M117 contribute to the S-adenosyl-L-methionine site.

This sequence belongs to the methyltransferase TylM1/DesVI family. In terms of assembly, homodimer.

The enzyme catalyses dTDP-3-amino-3,6-dideoxy-alpha-D-glucose + 2 S-adenosyl-L-methionine = dTDP-alpha-D-mycaminose + 2 S-adenosyl-L-homocysteine + 2 H(+). Its pathway is antibiotic biosynthesis; tylosin biosynthesis. In terms of biological role, S-adenosyl-L-methionine-dependent methyltransferase involved in the biosynthesis of mycaminose, an essential structural component of the macrolide antibiotic tylosin. Involved in the last step in mycaminose biosynthesis by mediating dimethylation of the hexose C-3' amino group. The protein is dTDP-3-amino-3,6-dideoxy-alpha-D-glucopyranose N,N-dimethyltransferase (tylM1) of Streptomyces fradiae (Streptomyces roseoflavus).